A 149-amino-acid polypeptide reads, in one-letter code: VapC ribonuclease PF0355 (149 aa).

The 115-residue stretch at 8–122 (TFDSLALIKM…ITDDSKRYEP (115 aa)) folds into the PINc domain. Mg(2+) is bound by residues D10 and D98.

The protein belongs to the PINc/VapC protein family. It depends on Mg(2+) as a cofactor.

In terms of biological role, toxic component of a type II toxin-antitoxin (TA) system. An RNase. The protein is VapC ribonuclease PF0355 of Pyrococcus furiosus (strain ATCC 43587 / DSM 3638 / JCM 8422 / Vc1).